We begin with the raw amino-acid sequence, 397 residues long: Tryptophan synthase beta chain (397 aa).

Lys-87 carries the N6-(pyridoxal phosphate)lysine modification.

This sequence belongs to the TrpB family. As to quaternary structure, tetramer of two alpha and two beta chains. Requires pyridoxal 5'-phosphate as cofactor.

It carries out the reaction (1S,2R)-1-C-(indol-3-yl)glycerol 3-phosphate + L-serine = D-glyceraldehyde 3-phosphate + L-tryptophan + H2O. The protein operates within amino-acid biosynthesis; L-tryptophan biosynthesis; L-tryptophan from chorismate: step 5/5. In terms of biological role, the beta subunit is responsible for the synthesis of L-tryptophan from indole and L-serine. The protein is Tryptophan synthase beta chain of Citrobacter koseri (strain ATCC BAA-895 / CDC 4225-83 / SGSC4696).